The sequence spans 153 residues: Ribosome maturation factor RimP (153 aa).

Belongs to the RimP family.

The protein resides in the cytoplasm. Required for maturation of 30S ribosomal subunits. In Clostridium botulinum (strain ATCC 19397 / Type A), this protein is Ribosome maturation factor RimP.